The chain runs to 416 residues: MNKQSWLLNLSLLKTHPAFRAVFLARFISIVSLGLLGVAVPVQIQIMTHSTWQVGLSVTLTGGAMFVGLMVGGVLADRYERKKVILLARGTCGIGFIGLCLNALLPEPSLLAIYLLGLWDGFFASLGVTALLAATPALVGRENLMQAGAITMLTVRLGSVISPMIGGLLLATGGVAWNYGLAAAGTFITLLPLLSLPALPPPPQPREHPLKSLLAGFRFLLASPLVGGIALLGGLLTMASAVRVLYPALADNWQMSAAQIGFLYAAIPLGAAIGALTSGKLAHSVRPGLLMLLSTLGAFLAIGLFGLMPMWILGVVCLALFGWLSAVSSLLQYTMLQTQTPEAMLGRINGLWTAQNVTGDAIGAALLGGLGAMMTPVASASASGFGLLIIGVLLLLVLVELRRFRQTPPQVTASDS.

The Cytoplasmic segment spans residues 1 to 21; that stretch reads MNKQSWLLNLSLLKTHPAFRA. The chain crosses the membrane as a helical span at residues 22–42; the sequence is VFLARFISIVSLGLLGVAVPV. Topologically, residues 43-55 are periplasmic; the sequence is QIQIMTHSTWQVG. Residues 56–76 form a helical membrane-spanning segment; sequence LSVTLTGGAMFVGLMVGGVLA. The Cytoplasmic segment spans residues 77-83; that stretch reads DRYERKK. The helical transmembrane segment at 84–104 threads the bilayer; that stretch reads VILLARGTCGIGFIGLCLNAL. Over 105 to 109 the chain is Periplasmic; that stretch reads LPEPS. A helical membrane pass occupies residues 110 to 130; it reads LLAIYLLGLWDGFFASLGVTA. Over 131–156 the chain is Cytoplasmic; the sequence is LLAATPALVGRENLMQAGAITMLTVR. A helical membrane pass occupies residues 157–177; that stretch reads LGSVISPMIGGLLLATGGVAW. A topological domain (periplasmic) is located at residue asparagine 178. Residues 179–199 form a helical membrane-spanning segment; that stretch reads YGLAAAGTFITLLPLLSLPAL. Over 200–218 the chain is Cytoplasmic; sequence PPPPQPREHPLKSLLAGFR. A helical membrane pass occupies residues 219–239; sequence FLLASPLVGGIALLGGLLTMA. Residues 240 to 256 lie on the Periplasmic side of the membrane; the sequence is SAVRVLYPALADNWQMS. Residues 257-277 traverse the membrane as a helical segment; it reads AAQIGFLYAAIPLGAAIGALT. Residues 278-287 are Cytoplasmic-facing; the sequence is SGKLAHSVRP. The chain crosses the membrane as a helical span at residues 288-307; that stretch reads GLLMLLSTLGAFLAIGLFGL. The Periplasmic portion of the chain corresponds to 308 to 313; sequence MPMWIL. Residues 314–336 form a helical membrane-spanning segment; sequence GVVCLALFGWLSAVSSLLQYTML. The Cytoplasmic portion of the chain corresponds to 337 to 356; that stretch reads QTQTPEAMLGRINGLWTAQN. A helical transmembrane segment spans residues 357–377; it reads VTGDAIGAALLGGLGAMMTPV. A topological domain (periplasmic) is located at residue alanine 378. A helical membrane pass occupies residues 379–399; that stretch reads SASASGFGLLIIGVLLLLVLV. Residues 400-416 lie on the Cytoplasmic side of the membrane; that stretch reads ELRRFRQTPPQVTASDS.

It belongs to the major facilitator superfamily. EntS (TC 2.A.1.38) family.

The protein resides in the cell inner membrane. Component of an export pathway for enterobactin. This is Enterobactin exporter EntS from Escherichia coli O127:H6 (strain E2348/69 / EPEC).